Here is a 154-residue protein sequence, read N- to C-terminus: Superoxide dismutase [Cu-Zn] (154 aa).

Cu cation is bound by residues His-47, His-49, and His-64. A disulfide bridge connects residues Cys-58 and Cys-147. Positions 64, 72, 81, and 84 each coordinate Zn(2+). A Cu cation-binding site is contributed by His-121. Arg-144 lines the substrate pocket.

The protein belongs to the Cu-Zn superoxide dismutase family. In terms of assembly, homodimer. Requires Cu cation as cofactor. Zn(2+) is required as a cofactor.

It localises to the cytoplasm. It catalyses the reaction 2 superoxide + 2 H(+) = H2O2 + O2. Its function is as follows. Destroys radicals which are normally produced within the cells and which are toxic to biological systems. The polypeptide is Superoxide dismutase [Cu-Zn] (sod1) (Schizosaccharomyces pombe (strain 972 / ATCC 24843) (Fission yeast)).